Here is a 748-residue protein sequence, read N- to C-terminus: Probable transcriptional regulator SLK1 (748 aa).

2 disordered regions span residues 67 to 93 (QHLP…RENN) and 138 to 163 (QQRL…QQQQ). A compositionally biased stretch (low complexity) spans 71–81 (QQQQQQLLQQQ). Positions 204–451 (PAENCITYWR…EQKIGPIEGL (248 aa)) are dimerization. The short motif at 213–227 (RKFVAEYFSPRAKQR) is the Nuclear localization signal element. Polar residues predominate over residues 572–587 (NAMNNPNSNTGKQEGF). Disordered regions lie at residues 572–653 (NAMN…GNTP) and 667–712 (ENGG…NNSF). The span at 588–606 (SSQNPTPNSNQSPSSSSQQ) shows a compositional bias: low complexity. Positions 615 to 653 (FPNSPQMQQQQRTMNGPTNILPQNHPHQLQSPHSHGNTP) are enriched in polar residues. Residues 667–686 (ENGGSVQQQQAFSGQSGSNS) show a composition bias toward low complexity. Polar residues predominate over residues 687–699 (NAERNTTASTSNI).

It belongs to the adn1/SEU family. As to quaternary structure, forms corepressor complexes with LUH; LUH is the transcription repressor subunit and SLK1 the specific DNA-binding adapters. Expressed in young flower meristems, ovules and the carpel margin meristem.

Its subcellular location is the nucleus. In terms of biological role, probable transcription regulator that functions in the development of the carpel margin meristem similarly to SEUSS (SEU). In association with SEU, supports organ development from meristematic regions by facilitating auxin response and thus organ initiation, and by sustaining meristematic potential through the maintenance of PHABULOSA expression. DNA-binding adapter subunit of the SEU-SLK1 transcriptional corepressor of abiotic stress (e.g. salt and osmotic stress) response genes. This Arabidopsis thaliana (Mouse-ear cress) protein is Probable transcriptional regulator SLK1 (SLK1).